Reading from the N-terminus, the 422-residue chain is FAD-dependent monooxygenase ptmM (422 aa).

A helical membrane pass occupies residues 8–24 (VIIVGGSIAGLTLAHCL). The FAD site is built by glutamate 35, glycine 49, arginine 108, aspartate 308, and alanine 321.

It belongs to the paxM FAD-dependent monooxygenase family. Requires FAD as cofactor.

It localises to the membrane. Its pathway is secondary metabolite biosynthesis. FAD-dependent monooxygenase; part of the gene cluster that mediates the biosynthesis of the indole diterpenes penitrems. The geranylgeranyl diphosphate (GGPP) synthase ptmG catalyzes the first step in penitrem biosynthesis via conversion of farnesyl pyrophosphate and isopentyl pyrophosphate into geranylgeranyl pyrophosphate (GGPP). Condensation of indole-3-glycerol phosphate with GGPP by the prenyl transferase ptmC then forms 3-geranylgeranylindole (3-GGI). Epoxidation by the FAD-dependent monooxygenase ptmM leads to a epoxidized-GGI that is substrate of the terpene cyclase ptmB for cyclization to yield paspaline. Paspaline is subsequently converted to 13-desoxypaxilline by the cytochrome P450 monooxygenase ptmP, the latter being then converted to paxilline by the cytochrome P450 monooxygenase ptmQ. Paxilline is converted to beta-paxitriol via C-10 ketoreduction by the short-chain dehydrogenase ptmH which can be monoprenylated at the C-20 by the indole diterpene prenyltransferase ptmD. A two-step elimination (acetylation and elimination) process performed by the O-acetyltransferase ptmV and ptmI leads to the production of the prenylated form of penijanthine. The FAD-linked oxidoreductase ptmO then converts the prenylated form of penijanthine into PC-M5 which is in turn transformed into PC-M4 by the aromatic dimethylallyltransferase ptmE. Five sequential oxidative transformations performed by the cytochrome P450 monooxygenases ptmK, ptmU, ptmL, ptmN and ptmJ yield the various penitrem compounds. PtmK, ptmU and ptmM are involved in the formation of the key bicyclic ring of penitrem C via the formation of the intermediates secopenitrem D and penitrem D. PtmL catalyzes the epoxidation of penitrem D and C to yield penitrem B and F, respectively. PtmJ catalyzes the last benzylic hydroxylation to convert penitrem B to prenitrem E and penitrem F to penitrem A. The polypeptide is FAD-dependent monooxygenase ptmM (Penicillium ochrochloron).